The sequence spans 280 residues: Proteasome subunit beta 2 (280 aa).

Positions 1-52 (MTERERGQGLPAEFFAVGTASFVELLSRTAPQLLPVNRVRDGSHPMPDIPHG) are cleaved as a propeptide — removed in mature form; by autocatalysis. Thr-53 serves as the catalytic Nucleophile.

Belongs to the peptidase T1B family. In terms of assembly, the 20S proteasome core is composed of 14 alpha and 14 beta subunits that assemble into four stacked heptameric rings, resulting in a barrel-shaped structure. The two inner rings, each composed of seven catalytic beta subunits, are sandwiched by two outer rings, each composed of seven alpha subunits. The catalytic chamber with the active sites is on the inside of the barrel. Has a gated structure, the ends of the cylinder being occluded by the N-termini of the alpha-subunits. Is capped by the proteasome-associated ATPase, ARC.

Its subcellular location is the cytoplasm. The enzyme catalyses Cleavage of peptide bonds with very broad specificity.. It functions in the pathway protein degradation; proteasomal Pup-dependent pathway. With respect to regulation, the formation of the proteasomal ATPase ARC-20S proteasome complex, likely via the docking of the C-termini of ARC into the intersubunit pockets in the alpha-rings, may trigger opening of the gate for substrate entry. Interconversion between the open-gate and close-gate conformations leads to a dynamic regulation of the 20S proteasome proteolysis activity. Component of the proteasome core, a large protease complex with broad specificity involved in protein degradation. This is Proteasome subunit beta 2 from Thermomonospora curvata (strain ATCC 19995 / DSM 43183 / JCM 3096 / KCTC 9072 / NBRC 15933 / NCIMB 10081 / Henssen B9).